A 471-amino-acid chain; its full sequence is uncharacterized protein (471 aa).

Helical transmembrane passes span 48-68 (FISA…FTIV), 85-105 (LSGV…YPML), 123-140 (YTMS…YALA), 145-165 (SVAL…MFLY), 186-206 (VVNS…GGLM), 223-243 (SGNW…FACF), 277-297 (FVGC…YFLL), 320-340 (GNFL…FSYL), 349-369 (IILL…TIHY), 379-399 (FIIY…SVSL), 414-434 (VAVQ…GGAF), and 440-460 (VVFF…LLII).

This sequence belongs to the major facilitator superfamily.

It is found in the golgi apparatus. The protein localises to the membrane. This is an uncharacterized protein from Schizosaccharomyces pombe (strain 972 / ATCC 24843) (Fission yeast).